Reading from the N-terminus, the 412-residue chain is Tyrosine--tRNA ligase (412 aa).

The 'HIGH' region signature appears at 56–65; that stretch reads PSAPDVHIGH. The 'KMSKS' region motif lies at 240-244; sequence KMSKS. Residue Lys-243 coordinates ATP. Positions 351–412 constitute an S4 RNA-binding domain; the sequence is VWIVDLLVTL…GKRKFKKLVR (62 aa).

Belongs to the class-I aminoacyl-tRNA synthetase family. TyrS type 2 subfamily. In terms of assembly, homodimer.

The protein localises to the cytoplasm. The enzyme catalyses tRNA(Tyr) + L-tyrosine + ATP = L-tyrosyl-tRNA(Tyr) + AMP + diphosphate + H(+). Functionally, catalyzes the attachment of tyrosine to tRNA(Tyr) in a two-step reaction: tyrosine is first activated by ATP to form Tyr-AMP and then transferred to the acceptor end of tRNA(Tyr). The protein is Tyrosine--tRNA ligase of Halalkalibacterium halodurans (strain ATCC BAA-125 / DSM 18197 / FERM 7344 / JCM 9153 / C-125) (Bacillus halodurans).